Here is a 359-residue protein sequence, read N- to C-terminus: Aromatic amino acid aminotransferase (359 aa).

The tract at residues Met1–Phe42 is disordered. At Lys223 the chain carries N6-(pyridoxal phosphate)lysine.

It belongs to the class-II pyridoxal-phosphate-dependent aminotransferase family. Homodimer. Pyridoxal 5'-phosphate serves as cofactor.

The catalysed reaction is an aromatic L-alpha-amino acid + 2-oxoglutarate = an aromatic oxo-acid + L-glutamate. In terms of biological role, aminotransferase that catalyzes the conversion of aromatic amino acids and 2-oxoglutarate into corresponding aromatic oxo acids and L-glutamate. The polypeptide is Aromatic amino acid aminotransferase (Thermobifida fusca (strain YX)).